The primary structure comprises 546 residues: Chaperonin GroEL (546 aa).

Residues 30 to 33 (TLGP), K51, 87 to 91 (DGTTT), G415, 479 to 481 (NAA), and D495 contribute to the ATP site.

It belongs to the chaperonin (HSP60) family. As to quaternary structure, forms a cylinder of 14 subunits composed of two heptameric rings stacked back-to-back. Interacts with the co-chaperonin GroES.

It is found in the cytoplasm. The enzyme catalyses ATP + H2O + a folded polypeptide = ADP + phosphate + an unfolded polypeptide.. Functionally, together with its co-chaperonin GroES, plays an essential role in assisting protein folding. The GroEL-GroES system forms a nano-cage that allows encapsulation of the non-native substrate proteins and provides a physical environment optimized to promote and accelerate protein folding. This is Chaperonin GroEL from Pseudomonas putida (strain W619).